Consider the following 286-residue polypeptide: Lipoyl synthase (286 aa).

Residues C29, C34, C40, C55, C59, C62, and S265 each coordinate [4Fe-4S] cluster. The Radical SAM core domain occupies 41 to 254; it reads WGSGTATFMI…EKIAYSLGFS (214 aa).

Belongs to the radical SAM superfamily. Lipoyl synthase family. The cofactor is [4Fe-4S] cluster.

The protein resides in the cytoplasm. It catalyses the reaction [[Fe-S] cluster scaffold protein carrying a second [4Fe-4S](2+) cluster] + N(6)-octanoyl-L-lysyl-[protein] + 2 oxidized [2Fe-2S]-[ferredoxin] + 2 S-adenosyl-L-methionine + 4 H(+) = [[Fe-S] cluster scaffold protein] + N(6)-[(R)-dihydrolipoyl]-L-lysyl-[protein] + 4 Fe(3+) + 2 hydrogen sulfide + 2 5'-deoxyadenosine + 2 L-methionine + 2 reduced [2Fe-2S]-[ferredoxin]. The protein operates within protein modification; protein lipoylation via endogenous pathway; protein N(6)-(lipoyl)lysine from octanoyl-[acyl-carrier-protein]: step 2/2. Functionally, catalyzes the radical-mediated insertion of two sulfur atoms into the C-6 and C-8 positions of the octanoyl moiety bound to the lipoyl domains of lipoate-dependent enzymes, thereby converting the octanoylated domains into lipoylated derivatives. This Sulfolobus acidocaldarius (strain ATCC 33909 / DSM 639 / JCM 8929 / NBRC 15157 / NCIMB 11770) protein is Lipoyl synthase.